The chain runs to 311 residues: Glutamyl-Q tRNA(Asp) synthetase (311 aa).

Residues 14–18 (RYAPS) and glutamate 50 contribute to the L-glutamate site. Positions 17 to 27 (PSPSGDLHLGN) match the 'HIGH' region motif. Zn(2+) is bound by residues cysteine 104, cysteine 106, tyrosine 125, and cysteine 129. Tyrosine 186 and arginine 204 together coordinate L-glutamate. A 'KMSKS' region motif is present at residues 242–246 (RLAKR). Position 245 (lysine 245) interacts with ATP.

The protein belongs to the class-I aminoacyl-tRNA synthetase family. GluQ subfamily. Zn(2+) serves as cofactor.

Functionally, catalyzes the tRNA-independent activation of glutamate in presence of ATP and the subsequent transfer of glutamate onto a tRNA(Asp). Glutamate is transferred on the 2-amino-5-(4,5-dihydroxy-2-cyclopenten-1-yl) moiety of the queuosine in the wobble position of the QUC anticodon. This Nocardia farcinica (strain IFM 10152) protein is Glutamyl-Q tRNA(Asp) synthetase.